The primary structure comprises 453 residues: Exodeoxyribonuclease 7 large subunit (453 aa).

This sequence belongs to the XseA family. Heterooligomer composed of large and small subunits.

Its subcellular location is the cytoplasm. The enzyme catalyses Exonucleolytic cleavage in either 5'- to 3'- or 3'- to 5'-direction to yield nucleoside 5'-phosphates.. In terms of biological role, bidirectionally degrades single-stranded DNA into large acid-insoluble oligonucleotides, which are then degraded further into small acid-soluble oligonucleotides. The protein is Exodeoxyribonuclease 7 large subunit of Geobacter metallireducens (strain ATCC 53774 / DSM 7210 / GS-15).